The primary structure comprises 135 residues: Retinol-binding protein 1 (135 aa).

Residues Arg-22–Lys-32 form an important for interaction with STRA6 region. Residues Lys-41, Met-63, and Gln-109 each coordinate all-trans-retinol.

It belongs to the calycin superfamily. Fatty-acid binding protein (FABP) family. In terms of assembly, interacts (only as retinol-free apoprotein) with STRA6.

It localises to the cytoplasm. The protein localises to the lipid droplet. Cytoplasmic retinol-binding protein. Accepts retinol from the transport protein STRA6, and thereby contributes to retinol uptake, storage and retinoid homeostasis. The chain is Retinol-binding protein 1 (Rbp1) from Rattus norvegicus (Rat).